The following is a 137-amino-acid chain: Small ribosomal subunit protein bS6 (137 aa).

The segment at 96–137 (ITEASPMAKAKDERDTRRSSEERAPRAEAAEEVEESAENTAE) is disordered. Residues 104 to 124 (KAKDERDTRRSSEERAPRAEA) are compositionally biased toward basic and acidic residues. Residues 125–137 (AEEVEESAENTAE) show a composition bias toward acidic residues.

This sequence belongs to the bacterial ribosomal protein bS6 family.

Functionally, binds together with bS18 to 16S ribosomal RNA. This Shewanella halifaxensis (strain HAW-EB4) protein is Small ribosomal subunit protein bS6.